The sequence spans 418 residues: Tyrosine--tRNA ligase (418 aa).

Y34 contributes to the L-tyrosine binding site. The 'HIGH' region signature appears at 39-48 (PTADSLHLGH). The L-tyrosine site is built by Y169 and Q173. The 'KMSKS' region signature appears at 229–233 (KFGKS). K232 provides a ligand contact to ATP. Residues 352–418 (LNIVDLLVTA…GKKKYFVLTY (67 aa)) enclose the S4 RNA-binding domain.

Belongs to the class-I aminoacyl-tRNA synthetase family. TyrS type 1 subfamily. In terms of assembly, homodimer.

The protein localises to the cytoplasm. The enzyme catalyses tRNA(Tyr) + L-tyrosine + ATP = L-tyrosyl-tRNA(Tyr) + AMP + diphosphate + H(+). Catalyzes the attachment of tyrosine to tRNA(Tyr) in a two-step reaction: tyrosine is first activated by ATP to form Tyr-AMP and then transferred to the acceptor end of tRNA(Tyr). This is Tyrosine--tRNA ligase from Streptococcus gordonii (strain Challis / ATCC 35105 / BCRC 15272 / CH1 / DL1 / V288).